Here is a 446-residue protein sequence, read N- to C-terminus: Glutamine synthetase (446 aa).

Residues 15–103 enclose the GS beta-grasp domain; that stretch reads ENVKFLRLQI…LICDVYYPDG (89 aa). One can recognise a GS catalytic domain in the interval 110 to 446; sequence PRYVLKRQIE…WELDRYLATY (337 aa). Mg(2+)-binding residues include Glu134 and Glu136. Glu186 is an ATP binding site. Residues Glu191 and Glu198 each coordinate Mg(2+). L-glutamate contacts are provided by residues 242–243 and Gly243; that span reads NG. His247 contributes to the Mg(2+) binding site. An ATP-binding site is contributed by Ser251. L-glutamate is bound by residues Arg300, Glu306, and Arg318. The ATP site is built by Arg318 and Arg323. Glu335 provides a ligand contact to Mg(2+). Residue Arg337 participates in L-glutamate binding.

The protein belongs to the glutamine synthetase family. Interacts with GCBP (TTHA1554). Requires Mg(2+) as cofactor.

The protein localises to the cytoplasm. It carries out the reaction L-glutamate + NH4(+) + ATP = L-glutamine + ADP + phosphate + H(+). Its activity is regulated as follows. Activity increases by approximately two-fold in the presence of GCBP. In terms of biological role, catalyzes the ATP-dependent biosynthesis of glutamine from glutamate and ammonia. In Thermus thermophilus (strain ATCC 27634 / DSM 579 / HB8), this protein is Glutamine synthetase.